Reading from the N-terminus, the 185-residue chain is Large ribosomal subunit protein bL25 (185 aa).

This sequence belongs to the bacterial ribosomal protein bL25 family. CTC subfamily. In terms of assembly, part of the 50S ribosomal subunit; part of the 5S rRNA/L5/L18/L25 subcomplex. Contacts the 5S rRNA. Binds to the 5S rRNA independently of L5 and L18.

In terms of biological role, this is one of the proteins that binds to the 5S RNA in the ribosome where it forms part of the central protuberance. The protein is Large ribosomal subunit protein bL25 of Chlamydia caviae (strain ATCC VR-813 / DSM 19441 / 03DC25 / GPIC) (Chlamydophila caviae).